A 418-amino-acid polypeptide reads, in one-letter code: Voltage-gated ClC-type chloride channel ClcB (418 aa).

The Cytoplasmic segment spans residues 1–4 (MFRR). A helical membrane pass occupies residues 5-25 (LLIATIVGILAAFAVAGFRHA). The Periplasmic portion of the chain corresponds to 26 to 53 (MLLLEWLFLNNDSGSLVNAATNLSPWRR). A helical transmembrane segment spans residues 54–74 (LLTPALGGLAAGLLLMGWQKF). Over 75-145 (TQQRPHAPTD…QRFTPRQEWK (71 aa)) the chain is Cytoplasmic. A helical transmembrane segment spans residues 146-166 (LWIACGAAAGMAAAYRAPLAG). The Periplasmic portion of the chain corresponds to 167–177 (SLFIAEVLFGT). Residues 178 to 200 (MMLASLGPVIISAVVALLISNLI) form a helical membrane-spanning segment. Topologically, residues 201-221 (NHSDALLYSVQLSVTVQARDY) are cytoplasmic. The helical transmembrane segment at 222–242 (ALIISTGVLAGLCGPLLLTLM) threads the bilayer. The Periplasmic segment spans residues 243–257 (NACHRGFVSLKLAPP). Residues 258–278 (WQLALGGLIVGLLSLFTPAVW) form a helical membrane-spanning segment. Residues 279–290 (GNGYSTVQSFLT) are Cytoplasmic-facing. Residues 291 to 311 (APPLLMIIAGIFLCKLCAVLA) form a helical membrane-spanning segment. The Periplasmic segment spans residues 312–315 (SSGS). Residues 316-336 (GAPGGVFTPTLFIGLAIGMLY) form a helical membrane-spanning segment. Residues 337–351 (GRSLGLWLPDGEEIT) lie on the Cytoplasmic side of the membrane. A helical transmembrane segment spans residues 352–372 (LLLGLTGMATLLAATTHAPIM). Over 373–379 (STLMICE) the chain is Periplasmic. Residues 380-400 (MTGEYQLLPGLLIACVIASVI) form a helical membrane-spanning segment. Residues 401 to 418 (SRTLHRDSIYRQHTAKHS) are Cytoplasmic-facing.

Belongs to the chloride channel (TC 2.A.49) family. ClcB subfamily.

The protein resides in the cell inner membrane. In terms of biological role, probably acts as an electrical shunt for an outwardly-directed proton pump that is linked to amino acid decarboxylation, as part of the extreme acid resistance (XAR) response. This Escherichia coli O6:H1 (strain CFT073 / ATCC 700928 / UPEC) protein is Voltage-gated ClC-type chloride channel ClcB (clcB).